A 94-amino-acid polypeptide reads, in one-letter code: Co-chaperonin GroES (94 aa).

It belongs to the GroES chaperonin family. Heptamer of 7 subunits arranged in a ring. Interacts with the chaperonin GroEL.

The protein localises to the cytoplasm. In terms of biological role, together with the chaperonin GroEL, plays an essential role in assisting protein folding. The GroEL-GroES system forms a nano-cage that allows encapsulation of the non-native substrate proteins and provides a physical environment optimized to promote and accelerate protein folding. GroES binds to the apical surface of the GroEL ring, thereby capping the opening of the GroEL channel. This is Co-chaperonin GroES from Latilactobacillus sakei subsp. sakei (strain 23K) (Lactobacillus sakei subsp. sakei).